The primary structure comprises 189 residues: MSSRGVRAAGTDGNDFQNRQRIAQHYQESAQYKSVLKWFFVPHFLILVFMWLKVGSEFLRYNFGWKNAFFERLDMPAAYPWEYVWCLSFIPIVLALSSFQRNKLKVLHYAYYAEFICGIFPCMIGLGGQLPELLEYANDMEGSNTPTFKGIFPMVIIWYIFFAVALQIHGFSMYFMHHLAAAWAPVKRD.

At 1–34 the chain is on the cytoplasmic side; that stretch reads MSSRGVRAAGTDGNDFQNRQRIAQHYQESAQYKS. Residues 35 to 55 traverse the membrane as a helical segment; the sequence is VLKWFFVPHFLILVFMWLKVG. The Lumenal segment spans residues 56 to 75; that stretch reads SEFLRYNFGWKNAFFERLDM. The chain crosses the membrane as a helical span at residues 76–96; sequence PAAYPWEYVWCLSFIPIVLAL. Topologically, residues 97 to 105 are cytoplasmic; the sequence is SSFQRNKLK. The chain crosses the membrane as a helical span at residues 106–126; sequence VLHYAYYAEFICGIFPCMIGL. Over 127–150 the chain is Lumenal; sequence GGQLPELLEYANDMEGSNTPTFKG. The chain crosses the membrane as a helical span at residues 151–171; the sequence is IFPMVIIWYIFFAVALQIHGF. Residues 172-189 lie on the Cytoplasmic side of the membrane; sequence SMYFMHHLAAAWAPVKRD.

This sequence belongs to the jagunal family.

It is found in the endoplasmic reticulum membrane. The chain is Protein jagunal homolog from Caenorhabditis briggsae.